Consider the following 403-residue polypeptide: CinA-like protein (403 aa).

This sequence belongs to the CinA family.

This Petrotoga mobilis (strain DSM 10674 / SJ95) protein is CinA-like protein.